Consider the following 575-residue polypeptide: Serine/threonine-protein kinase STY46 (575 aa).

The interval 116–140 is disordered; the sequence is ADLDSTSNDAGHSSPTRKSIHPPPA. The segment covering 118–132 has biased composition (polar residues); sequence LDSTSNDAGHSSPTR. The ACT domain maps to 178–252; sequence EITFSTEDKP…AKIELQSQSW (75 aa). A Protein kinase domain is found at 290–543; that stretch reads LKFGHKIASG…EIIEQLQEIA (254 aa). Residues 296-304 and K317 each bind ATP; that span reads IASGSYGDL. The Proton acceptor role is filled by D411. T443 bears the Phosphothreonine mark.

It belongs to the protein kinase superfamily. Ser/Thr protein kinase family. In terms of processing, autophosphorylated on serine and threonine residues. Autophosphorylated at Thr-443.

It is found in the cytoplasm. The protein resides in the cytosol. It carries out the reaction L-seryl-[protein] + ATP = O-phospho-L-seryl-[protein] + ADP + H(+). The enzyme catalyses L-threonyl-[protein] + ATP = O-phospho-L-threonyl-[protein] + ADP + H(+). Its activity is regulated as follows. Activated by autophosphorylation at Thr-443. Functionally, serine/threonine protein kinase that specifically phosphorylates chloroplast precursor proteins in the cytosol within the cleavable presequences (transit peptides). May be part of a cytosolic regulatory network involved in chloroplast protein import. Does not phosphorylate mitochondrion precursor proteins. Specific for ATP and does not utilize other NTPs. Plays a role in chloroplast biogenesis and differentiation in cotyledons, possibly through phosphorylation of chloroplast preproteins. The sequence is that of Serine/threonine-protein kinase STY46 from Arabidopsis thaliana (Mouse-ear cress).